A 396-amino-acid chain; its full sequence is Obg-like ATPase 1 (396 aa).

Residues 23 to 283 form the OBG-type G domain; sequence LKIGIVGLPN…LSAEERQKYL (261 aa). 32–37 is an ATP binding site; the sequence is NVGKST. S36 and T56 together coordinate Mg(2+). Residue L231 coordinates ATP. The Nuclear export signal signature appears at 267 to 274; the sequence is LELKLQEL. An N6-acetyllysine modification is found at K294. One can recognise a TGS domain in the interval 304-387; sequence QLEYFFTAGP…EDGDIIFFKF (84 aa).

The protein belongs to the TRAFAC class OBG-HflX-like GTPase superfamily. OBG GTPase family. YchF/OLA1 subfamily. Monomer. Requires Mg(2+) as cofactor. In terms of tissue distribution, expressed in all tissues tested but its expression is more abundant in testis, liver, lung, and brain. Overexpressed in several malignancies, including cancers of the colon, rectum, ovary, lung, stomach, and uterus.

The protein resides in the cytoplasm. It is found in the nucleus. It localises to the nucleolus. Its function is as follows. Hydrolyzes ATP, and can also hydrolyze GTP with lower efficiency. Has lower affinity for GTP. The sequence is that of Obg-like ATPase 1 from Homo sapiens (Human).